The following is a 497-amino-acid chain: Envelope glycoprotein E (497 aa).

The Virion surface segment spans residues 1–398; it reads MCVFQILIIV…GTIIYDILLT (398 aa). Residues Asn-60, Asn-133, Asn-148, Asn-203, Asn-277, Asn-366, and Asn-388 are each glycosylated (N-linked (GlcNAc...) asparagine; by host). The chain crosses the membrane as a helical span at residues 399-419; it reads SLSIGAIIIVIVGGVCIAILI. Residues 420 to 497 lie on the Intravirion side of the membrane; that stretch reads RRRRRRRTRG…KIRKRLDLYH (78 aa).

This sequence belongs to the alphaherpesvirinae glycoprotein E family. As to quaternary structure, interacts with gI. Post-translationally, phosphorylated within the acidic cluster. Phosphorylation determines whether endocytosed viral gE traffics to the trans-Golgi network or recycles to the cell membrane.

It is found in the virion membrane. Its subcellular location is the host cell membrane. The protein localises to the host cell junction. It localises to the host Golgi apparatus membrane. The protein resides in the host endosome membrane. In epithelial cells, the heterodimer gE/gI is required for the cell-to-cell spread of the virus, by sorting nascent virions to cell junctions. Once the virus reaches the cell junctions, virus particles can spread to adjacent cells extremely rapidly through interactions with cellular receptors that accumulate at these junctions. Implicated in basolateral spread in polarized cells. In neuronal cells, gE/gI is essential for the anterograde spread of the infection throughout the host nervous system. Together with US9, the heterodimer gE/gI is involved in the sorting and transport of viral structural components toward axon tips. The chain is Envelope glycoprotein E (MDV096) from Gallus gallus (Chicken).